Reading from the N-terminus, the 44-residue chain is MESPAFFFTLFLWFFLLSITIYSIYIGFGPPSKRLRDPFEEHED.

The chain crosses the membrane as a helical span at residues 6–26; that stretch reads FFFTLFLWFFLLSITIYSIYI.

Belongs to the PsbN family.

The protein resides in the plastid. It localises to the chloroplast thylakoid membrane. Functionally, may play a role in photosystem I and II biogenesis. The polypeptide is Protein PsbN (Oedogonium cardiacum (Filamentous green alga)).